The sequence spans 120 residues: Small cysteine and glycine repeat-containing protein 2 (120 aa).

The tract at residues 4–104 (CGCGGCGGCG…TCHSCGCGCG (101 aa)) is 19 X 2 AA repeats of CG.

This sequence belongs to the KRTAP type 28 family.

In terms of biological role, in the hair cortex, hair keratin intermediate filaments are embedded in an interfilamentous matrix, consisting of hair keratin-associated proteins (KRTAP), which are essential for the formation of a rigid and resistant hair shaft through their extensive disulfide bond cross-linking with abundant cysteine residues of hair keratins. The matrix proteins include the high-sulfur and high-glycine-tyrosine keratins. The protein is Small cysteine and glycine repeat-containing protein 2 of Homo sapiens (Human).